A 951-amino-acid polypeptide reads, in one-letter code: Valine--tRNA ligase (951 aa).

Positions 42–52 (PNVTGSLHMGH) match the 'HIGH' region motif. The 'KMSKS' region signature appears at 554–558 (KMSKS). Lys-557 provides a ligand contact to ATP. The stretch at 880–944 (AGLINKEDEL…AEAKAKLIEQ (65 aa)) forms a coiled coil.

This sequence belongs to the class-I aminoacyl-tRNA synthetase family. ValS type 1 subfamily. In terms of assembly, monomer.

Its subcellular location is the cytoplasm. The catalysed reaction is tRNA(Val) + L-valine + ATP = L-valyl-tRNA(Val) + AMP + diphosphate. Catalyzes the attachment of valine to tRNA(Val). As ValRS can inadvertently accommodate and process structurally similar amino acids such as threonine, to avoid such errors, it has a 'posttransfer' editing activity that hydrolyzes mischarged Thr-tRNA(Val) in a tRNA-dependent manner. This chain is Valine--tRNA ligase, found in Salmonella paratyphi A (strain ATCC 9150 / SARB42).